The sequence spans 681 residues: Amine oxidase [copper-containing] alpha 3, peroxisomal (681 aa).

323–334 (YLDCGDFGCGQC) serves as a coordination point for substrate. Residue Asp-325 is the Proton acceptor of the active site. Cys-344 and Cys-370 are oxidised to a cystine. 410-415 (VGNYDY) contributes to the substrate binding site. Catalysis depends on Tyr-413, which acts as the Schiff-base intermediate with substrate; via topaquinone. 2',4',5'-topaquinone is present on Tyr-413. His-470 and His-472 together coordinate Cu cation. Residues Asp-481, Asp-621, and Ile-622 each coordinate Mn(2+). His-632 is a binding site for Cu cation.

This sequence belongs to the copper/topaquinone oxidase family. Topaquinone (TPQ) is generated by copper-dependent autoxidation of a specific tyrosyl residue. In terms of tissue distribution, mostly expressed in stems, and, at lower levels, in flowers and leaves. Mainly detectable in stipules, hypocotyls and roots.

The protein localises to the peroxisome. The enzyme catalyses a primary methyl amine + O2 + H2O = an aldehyde + H2O2 + NH4(+). The protein operates within amine and polyamine degradation; putrescine degradation. In terms of biological role, copper amine oxidase that can use putrescine and spermidine as substrates. Involved in putrescine catabolism in peroxisomes. The polypeptide is Amine oxidase [copper-containing] alpha 3, peroxisomal (Arabidopsis thaliana (Mouse-ear cress)).